We begin with the raw amino-acid sequence, 269 residues long: Mitochondrial acidic protein mam33 (269 aa).

It belongs to the MAM33 family.

It is found in the cytoplasm. The protein localises to the mitochondrion matrix. This chain is Mitochondrial acidic protein mam33, found in Schizosaccharomyces pombe (strain 972 / ATCC 24843) (Fission yeast).